Here is a 134-residue protein sequence, read N- to C-terminus: Cytochrome b5 (134 aa).

Ala2 bears the N-acetylalanine mark. 3 positions are modified to N6-acetyllysine: Lys7, Lys10, and Lys19. The 77-residue stretch at 9–85 (VKYYTLEEIK…SKTFIIGELH (77 aa)) folds into the Cytochrome b5 heme-binding domain. Heme contacts are provided by His44 and His68. A helical transmembrane segment spans residues 109-131 (WWTNWVIPAISALIVALMYRLYM).

It belongs to the cytochrome b5 family.

The protein resides in the endoplasmic reticulum membrane. It localises to the microsome membrane. Cytochrome b5 is a membrane-bound hemoprotein functioning as an electron carrier for several membrane-bound oxygenases. This is Cytochrome b5 (CYB5A) from Oryctolagus cuniculus (Rabbit).